The following is a 273-amino-acid chain: MPELPEVETLKNSLESKLIGLVIKKVEFKRDNLRYKLSADLADQIVNTNIINVRRRAKYLIIDFNNNHSLIVHLGMSGRFTLQPNNYEVKKHDHVVFNLSNNEKLIFNDTRRFGMIYSFHTELLEKDFFANLALEPLSDSFELQYLKSKLMNKKVPIKNLLMDNRIVVGVGNIYASESLHLAKIHPDKFGKDLNDDEIKNLIAAVKNVLSKAIIAGGTTLKDFVNGDNKPGYFTQQLMVYARDGQECLSCSSSIIKTKHSGRSTFYCKSCQKA.

Residue P2 is the Schiff-base intermediate with DNA of the active site. E3 (proton donor) is an active-site residue. Catalysis depends on K58, which acts as the Proton donor; for beta-elimination activity. Residues H92, R111, and K153 each coordinate DNA. The FPG-type zinc finger occupies 238-272 (MVYARDGQECLSCSSSIIKTKHSGRSTFYCKSCQK). Catalysis depends on R262, which acts as the Proton donor; for delta-elimination activity.

It belongs to the FPG family. In terms of assembly, monomer. It depends on Zn(2+) as a cofactor.

It catalyses the reaction Hydrolysis of DNA containing ring-opened 7-methylguanine residues, releasing 2,6-diamino-4-hydroxy-5-(N-methyl)formamidopyrimidine.. The enzyme catalyses 2'-deoxyribonucleotide-(2'-deoxyribose 5'-phosphate)-2'-deoxyribonucleotide-DNA = a 3'-end 2'-deoxyribonucleotide-(2,3-dehydro-2,3-deoxyribose 5'-phosphate)-DNA + a 5'-end 5'-phospho-2'-deoxyribonucleoside-DNA + H(+). Involved in base excision repair of DNA damaged by oxidation or by mutagenic agents. Acts as a DNA glycosylase that recognizes and removes damaged bases. Has a preference for oxidized purines, such as 7,8-dihydro-8-oxoguanine (8-oxoG). Has AP (apurinic/apyrimidinic) lyase activity and introduces nicks in the DNA strand. Cleaves the DNA backbone by beta-delta elimination to generate a single-strand break at the site of the removed base with both 3'- and 5'-phosphates. This chain is Formamidopyrimidine-DNA glycosylase, found in Rickettsia bellii (strain OSU 85-389).